The following is a 115-amino-acid chain: Nitrogenase-stabilizing/protective protein NifW (115 aa).

The protein belongs to the NifW family. Homotrimer; associates with NifD.

In terms of biological role, may protect the nitrogenase Fe-Mo protein from oxidative damage. This is Nitrogenase-stabilizing/protective protein NifW from Methylobacterium sp. (strain 4-46).